A 500-amino-acid polypeptide reads, in one-letter code: Na(+)/H(+) antiporter NhaB (500 aa).

12 helical membrane-spanning segments follow: residues 34-54 (PLFFAVSPAAAGWCLVIEFIF), 62-82 (CYPLMPGGLLLVQALVLGMTT), 90-110 (LVHNFPVILLLMFMVAGIYFM), 129-149 (ALLGLLFCFLSAFLSAFLDAL), 150-170 (TVTAVIISAAVGFYSVYHRVA), 205-225 (LLMHGAVGTALGGVCTLVGEP), 241-261 (FFSKVAPVSMPVLAAGLVTCV), 311-331 (ILIVALALHVAEVGLIGLLVI), 350-370 (FKDAMPFTALLVVFFAVVAVI), 394-414 (MLFIANGLLSAISDNVFVATI), 449-469 (VATPNGQAAFLFLLTSAIAPL), and 477-497 (MVWMALPYTVVMGLLGWYAVS).

The protein belongs to the NhaB Na(+)/H(+) (TC 2.A.34) antiporter family.

The protein localises to the cell inner membrane. The enzyme catalyses 2 Na(+)(in) + 3 H(+)(out) = 2 Na(+)(out) + 3 H(+)(in). Functionally, na(+)/H(+) antiporter that extrudes sodium in exchange for external protons. The sequence is that of Na(+)/H(+) antiporter NhaB from Pseudomonas fluorescens (strain ATCC BAA-477 / NRRL B-23932 / Pf-5).